We begin with the raw amino-acid sequence, 300 residues long: 1D-myo-inositol 2-acetamido-2-deoxy-alpha-D-glucopyranoside deacetylase (300 aa).

Residues His13, Asp16, and His147 each coordinate Zn(2+).

It belongs to the MshB deacetylase family. Requires Zn(2+) as cofactor.

It carries out the reaction 1D-myo-inositol 2-acetamido-2-deoxy-alpha-D-glucopyranoside + H2O = 1D-myo-inositol 2-amino-2-deoxy-alpha-D-glucopyranoside + acetate. Functionally, catalyzes the deacetylation of 1D-myo-inositol 2-acetamido-2-deoxy-alpha-D-glucopyranoside (GlcNAc-Ins) in the mycothiol biosynthesis pathway. The sequence is that of 1D-myo-inositol 2-acetamido-2-deoxy-alpha-D-glucopyranoside deacetylase from Mycobacterium avium (strain 104).